A 512-amino-acid polypeptide reads, in one-letter code: 2,3-bisphosphoglycerate-independent phosphoglycerate mutase (512 aa).

Positions 14 and 64 each coordinate Mn(2+). The active-site Phosphoserine intermediate is Ser64. Substrate is bound by residues His125, 155 to 156, Arg187, Arg193, 259 to 262, and Lys332; these read RD and RADR. Asp399, His403, Asp440, His441, and His459 together coordinate Mn(2+).

It belongs to the BPG-independent phosphoglycerate mutase family. In terms of assembly, monomer. Mn(2+) is required as a cofactor.

The enzyme catalyses (2R)-2-phosphoglycerate = (2R)-3-phosphoglycerate. The protein operates within carbohydrate degradation; glycolysis; pyruvate from D-glyceraldehyde 3-phosphate: step 3/5. Functionally, catalyzes the interconversion of 2-phosphoglycerate and 3-phosphoglycerate. This Ruthia magnifica subsp. Calyptogena magnifica protein is 2,3-bisphosphoglycerate-independent phosphoglycerate mutase.